A 186-amino-acid polypeptide reads, in one-letter code: ATP synthase subunit delta (186 aa).

The protein belongs to the ATPase delta chain family. As to quaternary structure, F-type ATPases have 2 components, F(1) - the catalytic core - and F(0) - the membrane proton channel. F(1) has five subunits: alpha(3), beta(3), gamma(1), delta(1), epsilon(1). CF(0) has four main subunits: a(1), b(1), b'(1) and c(10-14). The alpha and beta chains form an alternating ring which encloses part of the gamma chain. F(1) is attached to F(0) by a central stalk formed by the gamma and epsilon chains, while a peripheral stalk is formed by the delta, b and b' chains.

The protein localises to the cell inner membrane. In terms of biological role, f(1)F(0) ATP synthase produces ATP from ADP in the presence of a proton or sodium gradient. F-type ATPases consist of two structural domains, F(1) containing the extramembraneous catalytic core and F(0) containing the membrane proton channel, linked together by a central stalk and a peripheral stalk. During catalysis, ATP synthesis in the catalytic domain of F(1) is coupled via a rotary mechanism of the central stalk subunits to proton translocation. This protein is part of the stalk that links CF(0) to CF(1). It either transmits conformational changes from CF(0) to CF(1) or is implicated in proton conduction. This chain is ATP synthase subunit delta, found in Rhodopseudomonas palustris (strain BisB5).